A 715-amino-acid chain; its full sequence is Ribosomal RNA large subunit methyltransferase K/L (715 aa).

Positions 47–158 (LGYKISLWTR…RDNVTIFLDF (112 aa)) constitute a THUMP domain.

The protein belongs to the methyltransferase superfamily. RlmKL family.

The protein resides in the cytoplasm. The enzyme catalyses guanosine(2445) in 23S rRNA + S-adenosyl-L-methionine = N(2)-methylguanosine(2445) in 23S rRNA + S-adenosyl-L-homocysteine + H(+). The catalysed reaction is guanosine(2069) in 23S rRNA + S-adenosyl-L-methionine = N(2)-methylguanosine(2069) in 23S rRNA + S-adenosyl-L-homocysteine + H(+). Its function is as follows. Specifically methylates the guanine in position 2445 (m2G2445) and the guanine in position 2069 (m7G2069) of 23S rRNA. This chain is Ribosomal RNA large subunit methyltransferase K/L, found in Colwellia psychrerythraea (strain 34H / ATCC BAA-681) (Vibrio psychroerythus).